Here is an 876-residue protein sequence, read N- to C-terminus: Leucine--tRNA ligase (876 aa).

The short motif at 42-52 is the 'HIGH' region element; that stretch reads PYPSGKLHMGH. The 'KMSKS' region signature appears at 634–638; it reads KMGKS. ATP is bound at residue Lys637.

Belongs to the class-I aminoacyl-tRNA synthetase family.

It is found in the cytoplasm. The catalysed reaction is tRNA(Leu) + L-leucine + ATP = L-leucyl-tRNA(Leu) + AMP + diphosphate. The chain is Leucine--tRNA ligase from Variovorax paradoxus (strain S110).